The sequence spans 64 residues: Large ribosomal subunit protein bL35 (64 aa).

It belongs to the bacterial ribosomal protein bL35 family.

This chain is Large ribosomal subunit protein bL35, found in Helicobacter hepaticus (strain ATCC 51449 / 3B1).